A 549-amino-acid polypeptide reads, in one-letter code: Probable protein kinase UbiB (549 aa).

Residues 123 to 501 (DFDDTPLASA…QQKAHKSNYL (379 aa)) form the Protein kinase domain. Residues 129 to 137 (LASASISQV) and Lys152 each bind ATP. The Proton acceptor role is filled by Asp287. Helical transmembrane passes span 498–518 (SNYLLITSAILVICGTILLNQ) and 520–540 (ATLWPSYGSIGIGITLWVLGW).

Belongs to the ABC1 family. UbiB subfamily.

It is found in the cell inner membrane. It participates in cofactor biosynthesis; ubiquinone biosynthesis [regulation]. Is probably a protein kinase regulator of UbiI activity which is involved in aerobic coenzyme Q (ubiquinone) biosynthesis. This chain is Probable protein kinase UbiB, found in Shewanella pealeana (strain ATCC 700345 / ANG-SQ1).